The chain runs to 550 residues: Glucose-6-phosphate isomerase (550 aa).

E356 acts as the Proton donor in catalysis. Residues H387 and K515 contribute to the active site.

This sequence belongs to the GPI family.

Its subcellular location is the cytoplasm. The catalysed reaction is alpha-D-glucose 6-phosphate = beta-D-fructose 6-phosphate. Its pathway is carbohydrate biosynthesis; gluconeogenesis. It participates in carbohydrate degradation; glycolysis; D-glyceraldehyde 3-phosphate and glycerone phosphate from D-glucose: step 2/4. Its function is as follows. Catalyzes the reversible isomerization of glucose-6-phosphate to fructose-6-phosphate. In Aliivibrio fischeri (strain MJ11) (Vibrio fischeri), this protein is Glucose-6-phosphate isomerase.